Consider the following 420-residue polypeptide: Gamma-glutamyl phosphate reductase (420 aa).

It belongs to the gamma-glutamyl phosphate reductase family.

The protein localises to the cytoplasm. The enzyme catalyses L-glutamate 5-semialdehyde + phosphate + NADP(+) = L-glutamyl 5-phosphate + NADPH + H(+). It functions in the pathway amino-acid biosynthesis; L-proline biosynthesis; L-glutamate 5-semialdehyde from L-glutamate: step 2/2. Its function is as follows. Catalyzes the NADPH-dependent reduction of L-glutamate 5-phosphate into L-glutamate 5-semialdehyde and phosphate. The product spontaneously undergoes cyclization to form 1-pyrroline-5-carboxylate. The chain is Gamma-glutamyl phosphate reductase from Neisseria meningitidis serogroup A / serotype 4A (strain DSM 15465 / Z2491).